The chain runs to 98 residues: Peptides MS9.1 (98 aa).

Positions 1-21 (MKQSLILAVLCLALVFATIEA) are cleaved as a signal peptide. Positions 22–27 (KPKADP) are excised as a propeptide. Disulfide bonds link C34–C46 and C37–C52. 2 propeptides span residues 63–64 (DP) and 92–98 (DPVRDAE).

The protein belongs to the sea anemone BBH family.

The protein localises to the secreted. The protein resides in the nematocyst. Functionally, acts as a positive modulator of mammalian TRPA1, a non-selective cation channel involved in detection of pain, in vitro yet has an analgesic and anti-inflammatory effect in vivo. The sequence is that of Peptides MS9.1 from Metridium senile (Brown sea anemone).